We begin with the raw amino-acid sequence, 441 residues long: Chromosome partition protein MukF (441 aa).

Positions Leu208–Ile236 are leucine-zipper.

Belongs to the MukF family. Interacts, and probably forms a ternary complex, with MukE and MukB via its C-terminal region. The complex formation is stimulated by calcium or magnesium. It is required for an interaction between MukE and MukB.

It localises to the cytoplasm. It is found in the nucleoid. Its function is as follows. Involved in chromosome condensation, segregation and cell cycle progression. May participate in facilitating chromosome segregation by condensation DNA from both sides of a centrally located replisome during cell division. Not required for mini-F plasmid partitioning. Probably acts via its interaction with MukB and MukE. Overexpression results in anucleate cells. It has a calcium binding activity. The protein is Chromosome partition protein MukF of Pectobacterium atrosepticum (strain SCRI 1043 / ATCC BAA-672) (Erwinia carotovora subsp. atroseptica).